A 171-amino-acid chain; its full sequence is MLNLAKELVGDEALGLLKYLIGKKSEITDEEIAKELNTKPNEVRKYLYLLSDHGLVTYRKTKDKDSNLYIYYWKVNVNQINEILLSRKRLILEKLRNRYEQEKDGLFYFCPQDNIKYSFDDAIENEFKCLKCGTSLSQYDSEKARSFLEQKIKQIEEEINKEIRRESSKSY.

The 81-residue stretch at 1 to 81 (MLNLAKELVG…YWKVNVNQIN (81 aa)) folds into the HTH TFE/IIEalpha-type domain.

Belongs to the TFE family. Monomer. Interaction with RNA polymerase subunits RpoF and RpoE is necessary for Tfe stimulatory transcription activity. Able to interact with Tbp and RNA polymerase in the absence of DNA promoter. Interacts both with the preinitiation and elongation complexes.

Its function is as follows. Transcription factor that plays a role in the activation of archaeal genes transcribed by RNA polymerase. Facilitates transcription initiation by enhancing TATA-box recognition by TATA-box-binding protein (Tbp), and transcription factor B (Tfb) and RNA polymerase recruitment. Not absolutely required for transcription in vitro, but particularly important in cases where Tbp or Tfb function is not optimal. It dynamically alters the nucleic acid-binding properties of RNA polymerases by stabilizing the initiation complex and destabilizing elongation complexes. Seems to translocate with the RNA polymerase following initiation and acts by binding to the non template strand of the transcription bubble in elongation complexes. The protein is Transcription factor E of Sulfolobus acidocaldarius (strain ATCC 33909 / DSM 639 / JCM 8929 / NBRC 15157 / NCIMB 11770).